A 278-amino-acid polypeptide reads, in one-letter code: MWSAQLLSQLLPLWPLLLLSVLPPAQGSSHRSPPAPARPPCVRGGPSAPRHVCVWERAPPPSRSPRVPRSRRQVVPGTAPPATPSGFEEGPPSSQYPWAIVWGPTVSREDGGDPNSVNPGFLPLDYGFAAPHGLATPHPNSDSMRDDGDGLILGETPATLRPFLFGGRGEGVDPQLYVTITISIIIVLVATGIIFKFCWDRSQKRRRPSGQQGALRQEESQQPLTDLSPAGVTVLGAFGDSPTPTPDHEEPRGGPRPGMPQPKGAPAFQLNRIPLVNL.

Positions 1-27 (MWSAQLLSQLLPLWPLLLLSVLPPAQG) are cleaved as a signal peptide. A disordered region spans residues 25 to 93 (AQGSSHRSPP…PSGFEEGPPS (69 aa)). Residues 28–174 (SSHRSPPAPA…FGGRGEGVDP (147 aa)) lie on the Extracellular side of the membrane. The O-linked (GalNAc...) threonine glycan is linked to Thr-136. A helical membrane pass occupies residues 175–195 (QLYVTITISIIIVLVATGIIF). Residues 196–278 (KFCWDRSQKR…QLNRIPLVNL (83 aa)) lie on the Cytoplasmic side of the membrane. The segment at 206 to 278 (RRPSGQQGAL…QLNRIPLVNL (73 aa)) is disordered. Positions 209-225 (SGQQGALRQEESQQPLT) are enriched in polar residues.

In terms of processing, O-glycosylation at Thr-136 is essential for recognition by PILRA. As to expression, mainly expressed in brain and spinal cord. Weak expression also detected in heart, kidney, spleen and lymph node. Virtually no expression detected in liver and embryo relative to brain.

Its subcellular location is the membrane. Its function is as follows. Acts as a ligand for PILRA in neuronal tissues, where it may be involved in immune regulation. This chain is PILR alpha-associated neural protein (Pianp), found in Mus musculus (Mouse).